The primary structure comprises 497 residues: Probable polyamine oxidase 4 (497 aa).

The FAD site is built by Glu58, Arg66, Val247, and Glu435. A Microbody targeting signal motif is present at residues 495 to 497 (SRM).

This sequence belongs to the flavin monoamine oxidase family. FAD serves as cofactor. Highly expressed in roots, flowers and greening cotelydons. Lower expression in other tissues.

Its subcellular location is the peroxisome. It catalyses the reaction spermine + O2 + H2O = 3-aminopropanal + spermidine + H2O2. The catalysed reaction is spermidine + O2 + H2O = 3-aminopropanal + putrescine + H2O2. It participates in amine and polyamine degradation; spermine degradation. The protein operates within amine and polyamine degradation; spermidine degradation. Its function is as follows. Flavoenzyme involved in polyamine back-conversion. Catalyzes the oxidation of the secondary amino group of polyamines, such as spermine and spermidine. Substrate preference is spermine &gt; spermidine. No activity detected when putrescine or N(1)-acetylspermine are used as substrates. Plays an important role in the regulation of polyamine intracellular concentration. The protein is Probable polyamine oxidase 4 (PAO4) of Arabidopsis thaliana (Mouse-ear cress).